The following is a 57-amino-acid chain: MLFKSLQSITSVNSIQKNQISSISLGSSQSNNNAALLDAAAFVAIPGLLTAAAVAHI.

This is an uncharacterized protein from Dictyostelium discoideum (Social amoeba).